The chain runs to 716 residues: Polyribonucleotide nucleotidyltransferase (716 aa).

The Mg(2+) site is built by D480 and D486. One can recognise a KH domain in the interval 547 to 606 (PKIVQLQIDIDKISLVIGSTGKTVKAITDEFEVKVQIEQNGKIILFGDDDFKMQKAKERI). Positions 616–711 (GEIYEGTVKK…KFGKIDLEIV (96 aa)) constitute an S1 motif domain.

It belongs to the polyribonucleotide nucleotidyltransferase family. Mg(2+) is required as a cofactor.

The protein resides in the cytoplasm. It carries out the reaction RNA(n+1) + phosphate = RNA(n) + a ribonucleoside 5'-diphosphate. Functionally, involved in mRNA degradation. Catalyzes the phosphorolysis of single-stranded polyribonucleotides processively in the 3'- to 5'-direction. The polypeptide is Polyribonucleotide nucleotidyltransferase (Borreliella burgdorferi (strain ATCC 35210 / DSM 4680 / CIP 102532 / B31) (Borrelia burgdorferi)).